Reading from the N-terminus, the 364-residue chain is Long-wave-sensitive opsin 1 (364 aa).

Over Met-1–Val-52 the chain is Extracellular. The O-linked (GlcNAc) serine glycan is linked to Ser-22. An N-linked (GlcNAc...) asparagine glycan is attached at Asn-34. Residues Tyr-53–Ala-77 traverse the membrane as a helical segment. At Thr-78–Asn-89 the chain is on the cytoplasmic side. A helical membrane pass occupies residues Trp-90–Met-115. Topologically, residues Tyr-116–Glu-129 are extracellular. Cysteines 126 and 203 form a disulfide. A helical membrane pass occupies residues Gly-130–Trp-149. At Glu-150–Leu-168 the chain is on the cytoplasmic side. Residues Ala-169–Ser-192 traverse the membrane as a helical segment. Over Arg-193–Ser-218 the chain is Extracellular. Residues Tyr-219–Ile-246 traverse the membrane as a helical segment. Residues Arg-247–Arg-268 are Cytoplasmic-facing. The chain crosses the membrane as a helical span at residues Met-269–Ala-292. The Extracellular portion of the chain corresponds to Ala-293–His-300. Residues Pro-301–Met-325 traverse the membrane as a helical segment. Lys-312 is modified (N6-(retinylidene)lysine). The Cytoplasmic segment spans residues Asn-326 to Ala-364.

It belongs to the G-protein coupled receptor 1 family. Opsin subfamily. Post-translationally, phosphorylated on some or all of the serine and threonine residues present in the C-terminal region. Expressed in retina (at protein level). Expressed in cone and/or rod photoreceptor cells (at protein level).

Its subcellular location is the membrane. Functionally, visual pigments are the light-absorbing molecules that mediate vision. They consist of an apoprotein, opsin, covalently linked to cis-retinal. The sequence is that of Long-wave-sensitive opsin 1 (OPN1LW) from Bos taurus (Bovine).